We begin with the raw amino-acid sequence, 1296 residues long: Histone-lysine N-methyltransferase EHMT1 (1296 aa).

2 disordered regions span residues 1–111 (MAAA…NHVT) and 170–200 (PQTP…TDVR). Ala-2 is subject to N-acetylalanine. Positions 14 to 31 (QETKQDCCMKTELLREDT) are enriched in basic and acidic residues. Lys-23 is covalently cross-linked (Glycyl lysine isopeptide (Lys-Gly) (interchain with G-Cter in SUMO1); alternate). Lys-23 participates in a covalent cross-link: Glycyl lysine isopeptide (Lys-Gly) (interchain with G-Cter in SUMO2); alternate. The span at 77-89 (NTRASPQEGTNRV) shows a compositional bias: polar residues. Over residues 97-106 (VSERDTEVGK) the composition is skewed to basic and acidic residues. Residues Lys-191, Lys-229, Lys-232, Lys-315, and Lys-325 each participate in a glycyl lysine isopeptide (Lys-Gly) (interchain with G-Cter in SUMO2) cross-link. Positions 341–470 (SLEMDSEDED…SSPGSMEQAA (130 aa)) are disordered. The span at 342–360 (LEMDSEDEDSDELEDDEDH) shows a compositional bias: acidic residues. Positions 371–391 (EDSRTSKESMSETDRAAKMDG) are enriched in basic and acidic residues. Residues 392-414 (DSEEEQESPDTGEDEDGGDESDL) show a composition bias toward acidic residues. Lys-430 is covalently cross-linked (Glycyl lysine isopeptide (Lys-Gly) (interchain with G-Cter in SUMO2)). Residue Ser-433 is modified to Phosphoserine. Positions 438 to 450 (PARKRRRRSRKKP) are enriched in basic residues. Ser-481 bears the Phosphoserine mark. Glycyl lysine isopeptide (Lys-Gly) (interchain with G-Cter in SUMO2) cross-links involve residues Lys-559, Lys-644, Lys-659, and Lys-729. Residues 653–714 (LAPGQEKSLA…PTSGLSQGPG (62 aa)) form a disordered region. ANK repeat units follow at residues 735 to 764 (FHPK…DPNF), 770 to 799 (SKRS…NIDT), 803 to 832 (DQRT…QVDP), 836 to 866 (EGST…DVNC), 870 to 899 (GGWT…DINI), 903 to 932 (EENI…DLHA), 936 to 965 (HGDS…DVTL), and 969 to 1002 (EGET…DKPV). Residues 903-905 (EEN) are histone H3K9me binding. Ser-1046 carries the phosphoserine modification. The 64-residue stretch at 1058 to 1121 (QYCVCVDDCS…NCRNRVVQNG (64 aa)) folds into the Pre-SET domain. Zn(2+) is bound by residues Cys-1060, Cys-1062, Cys-1066, Cys-1071, Cys-1073, Cys-1103, Cys-1107, Cys-1109, and Cys-1113. One can recognise an SET domain in the interval 1124–1241 (ARLQLYRTQD…AGEQLGFDYG (118 aa)). S-adenosyl-L-methionine-binding positions include 1134-1136 (MGW), Tyr-1171, and 1198-1199 (NH). Residues 1160–1179 (DSEADVREEDSYLFDLDNKD) are interaction with histone H3. Cys-1201 serves as a coordination point for Zn(2+). The segment at 1240–1243 (YGER) is interaction with histone H3. Zn(2+) is bound at residue Cys-1254. Residue Arg-1255 coordinates S-adenosyl-L-methionine. Zn(2+) is bound by residues Cys-1256 and Cys-1261. A disordered region spans residues 1271 to 1296 (RQASAAQEPQENGLPDTSSAAAADPL).

This sequence belongs to the class V-like SAM-binding methyltransferase superfamily. Interacts with WIZ. Part of the E2F6.com-1 complex in G0 phase composed of E2F6, MGA, MAX, TFDP1, CBX3, BAT8, EHMT1, RING1, RNF2, MBLR, L3MBTL2 and YAF2. Interacts with MPHOSPH8. Interacts with CDYL. Interacts with REST only in the presence of CDYL. Part of a complex containing at least CDYL, REST, WIZ, SETB1, EHMT1 and EHMT2. Heterodimer; heterodimerizes with EHMT2. Interacts (via ANK repeats) with RELA (when monomethylated at 'Lys-310'). Interacts with Baz2b. As to expression, ubiquitous.

It localises to the nucleus. It is found in the chromosome. The catalysed reaction is N(6)-methyl-L-lysyl(9)-[histone H3] + S-adenosyl-L-methionine = N(6),N(6)-dimethyl-L-lysyl(9)-[histone H3] + S-adenosyl-L-homocysteine + H(+). The enzyme catalyses L-lysyl(9)-[histone H3] + S-adenosyl-L-methionine = N(6)-methyl-L-lysyl(9)-[histone H3] + S-adenosyl-L-homocysteine + H(+). With respect to regulation, methyltransferase activity is inhibited by BIX-01294. Efficiently inhibited by compound E72, a BIX-01294 derivative in which the diazepane ring and the benzyl are replaced with a 3-dimethylaminopropyl and a 5-aminopentyl group at sites B and C, respectively. Histone methyltransferase that specifically mono- and dimethylates 'Lys-9' of histone H3 (H3K9me1 and H3K9me2, respectively) in euchromatin. H3K9me represents a specific tag for epigenetic transcriptional repression by recruiting HP1 proteins to methylated histones. Also weakly methylates 'Lys-27' of histone H3 (H3K27me). Also required for DNA methylation, the histone methyltransferase activity is not required for DNA methylation, suggesting that these 2 activities function independently. Probably targeted to histone H3 by different DNA-binding proteins like E2F6, MGA, MAX and/or DP1. During G0 phase, it probably contributes to silencing of MYC- and E2F-responsive genes, suggesting a role in G0/G1 transition in cell cycle. In addition to the histone methyltransferase activity, also methylates non-histone proteins: mediates dimethylation of 'Lys-373' of p53/TP53. Represses the expression of mitochondrial function-related genes, perhaps by occupying their promoter regions, working in concert with probable chromatin reader Baz2b. The polypeptide is Histone-lysine N-methyltransferase EHMT1 (Ehmt1) (Mus musculus (Mouse)).